The primary structure comprises 431 residues: Histidine--tRNA ligase (431 aa).

It belongs to the class-II aminoacyl-tRNA synthetase family. As to quaternary structure, homodimer.

The protein localises to the cytoplasm. It carries out the reaction tRNA(His) + L-histidine + ATP = L-histidyl-tRNA(His) + AMP + diphosphate + H(+). The protein is Histidine--tRNA ligase of Finegoldia magna (strain ATCC 29328 / DSM 20472 / WAL 2508) (Peptostreptococcus magnus).